Reading from the N-terminus, the 1218-residue chain is Coatomer subunit alpha-3 (1218 aa).

WD repeat units follow at residues 7 to 48 (TKSN…DRFD), 49 to 88 (EHDG…CLFT), 91 to 132 (GHLD…AVLT), 133 to 172 (GHNH…KKTV), 202 to 241 (GHDR…AWEV), 246 to 285 (GHMN…GIQT), 288 to 326 (REHD…PAFS), 363 to 404 (SLNQ…AGRT), and 450 to 489 (PLPI…GELQ). A disordered region spans residues 854 to 893 (AMANGGDGFDAEEGEANEEDGEEGGWDLEDLELPPEAETP). Acidic residues predominate over residues 862-888 (FDAEEGEANEEDGEEGGWDLEDLELPP).

As to quaternary structure, oligomeric complex that consists of at least the alpha, beta, beta', gamma, delta, epsilon and zeta subunits.

The protein resides in the cytoplasm. It localises to the golgi apparatus membrane. Its subcellular location is the cytoplasmic vesicle. It is found in the COPI-coated vesicle membrane. Functionally, the coatomer is a cytosolic protein complex that binds to dilysine motifs and reversibly associates with Golgi non-clathrin-coated vesicles, which further mediate biosynthetic protein transport from the ER, via the Golgi up to the trans Golgi network. Coatomer complex is required for budding from Golgi membranes, and is essential for the retrograde Golgi-to-ER transport of dilysine-tagged proteins. This Oryza sativa subsp. japonica (Rice) protein is Coatomer subunit alpha-3.